The following is a 426-amino-acid chain: Histidine--tRNA ligase (426 aa).

The protein belongs to the class-II aminoacyl-tRNA synthetase family.

It localises to the cytoplasm. The catalysed reaction is tRNA(His) + L-histidine + ATP = L-histidyl-tRNA(His) + AMP + diphosphate + H(+). This chain is Histidine--tRNA ligase, found in Saccharolobus shibatae (strain ATCC 51178 / DSM 5389 / JCM 8931 / NBRC 15437 / B12) (Sulfolobus shibatae).